The sequence spans 96 residues: Protein Vpr (96 aa).

The tract at residues 1–42 is homooligomerization; the sequence is MEQAPEDQGPQREPYNEWTLDLLEELKNEAVRHFPRPWLHSL. Phosphoserine; by host occurs at positions 79, 94, and 96.

It belongs to the HIV-1 VPR protein family. In terms of assembly, homooligomer, may form homodimer. Interacts with p6-gag region of the Pr55 Gag precursor protein through a (Leu-X-X)4 motif near the C-terminus of the P6gag protein. Interacts with host UNG. May interact with host RAD23A/HHR23A. Interacts with host VPRBP/DCAF1, leading to hijack the CUL4A-RBX1-DDB1-DCAF1/VPRBP complex, mediating ubiquitination of host proteins such as TERT and ZGPAT and arrest of the cell cycle in G2 phase. In terms of processing, phosphorylated on several residues by host. These phosphorylations regulate VPR activity for the nuclear import of the HIV-1 pre-integration complex.

Its subcellular location is the virion. It is found in the host nucleus. The protein resides in the host extracellular space. Its function is as follows. During virus replication, may deplete host UNG protein, and incude G2-M cell cycle arrest. Acts by targeting specific host proteins for degradation by the 26S proteasome, through association with the cellular CUL4A-DDB1 E3 ligase complex by direct interaction with host VPRPB/DCAF-1. Cell cycle arrest reportedly occurs within hours of infection and is not blocked by antiviral agents, suggesting that it is initiated by the VPR carried into the virion. Additionally, VPR induces apoptosis in a cell cycle dependent manner suggesting that these two effects are mechanistically linked. Detected in the serum and cerebrospinal fluid of AIDS patient, VPR may also induce cell death to bystander cells. During virus entry, plays a role in the transport of the viral pre-integration (PIC) complex to the host nucleus. This function is crucial for viral infection of non-dividing macrophages. May act directly at the nuclear pore complex, by binding nucleoporins phenylalanine-glycine (FG)-repeat regions. The protein is Protein Vpr of Human immunodeficiency virus type 1 group M subtype F1 (isolate 93BR020) (HIV-1).